We begin with the raw amino-acid sequence, 758 residues long: Vitamin K-dependent gamma-carboxylase (758 aa).

The interval 1 to 31 (MAVSARSARSPPDSDKVQKDKAGQTSGRRQG) is disordered. Position 2 is an N-acetylalanine (Ala-2). Topologically, residues 2-60 (AVSARSARSPPDSDKVQKDKAGQTSGRRQGSRMGKLLGFEWTDVSSWGKLVTLLNRPTD) are cytoplasmic. Positions 12 to 22 (PDSDKVQKDKA) are enriched in basic and acidic residues. The chain crosses the membrane as a helical span at residues 61–81 (PASLAVFRFLFGLMMVLDIPQ). The Lumenal portion of the chain corresponds to 82–113 (ERGLSSLDRRYLDGLEVCRFPLLDALQPLPLD). Cys-99 and Cys-450 form a disulfide bridge. Residues 114-134 (WMYLVYTIMFLGALGMMLGLR) traverse the membrane as a helical segment. Over 135-136 (YR) the chain is Cytoplasmic. Residues 137–157 (ISCVLFLLPYWYVFLLDKTSW) form a helical membrane-spanning segment. At 158-292 (NNHSYLYGLL…VSYFHCMNSQ (135 aa)) the chain is on the lumenal side. A helical transmembrane segment spans residues 293 to 313 (LFSIGMFPYVMLASSPLFCSP). At 314 to 361 (EWPRKLVAHCPKRLQELLPLRTAPQPSASCVYKRSRAKGGQKPGLRHR) the chain is on the cytoplasmic side. The chain crosses the membrane as a helical span at residues 362 to 382 (LGAAFTLLYLLEQLFLPYSHF). At 383–758 (LTQGYNNWTN…PNADAVHSEF (376 aa)) the chain is on the lumenal side. Positions 727–758 (PFEPVGEPSPSNTDSSNPNPSEPNADAVHSEF) are disordered. The span at 734–750 (PSPSNTDSSNPNPSEPN) shows a compositional bias: low complexity.

The protein belongs to the vitamin K-dependent gamma-carboxylase family. Monomer. May interact with CALU.

The protein resides in the endoplasmic reticulum membrane. It carries out the reaction 4-carboxy-L-glutamyl-[protein] + 2,3-epoxyphylloquinone + H2O + H(+) = phylloquinol + L-glutamyl-[protein] + CO2 + O2. Its function is as follows. Mediates the vitamin K-dependent carboxylation of glutamate residues to calcium-binding gamma-carboxyglutamate (Gla) residues with the concomitant conversion of the reduced hydroquinone form of vitamin K to vitamin K epoxide. Catalyzes gamma-carboxylation of various proteins, such as blood coagulation factors (F2, F7, F9 and F10), osteocalcin (BGLAP) or matrix Gla protein (MGP). The polypeptide is Vitamin K-dependent gamma-carboxylase (GGCX) (Delphinapterus leucas (Beluga whale)).